A 636-amino-acid polypeptide reads, in one-letter code: MTDDFAPDGQLAKAIPGFKPREPQRQMAVAVTQAIEKGQPLVVEAGTGTGKTYAYLAPALRAKKKVIISTGSKALQDQLYSRDLPTVSKALKYTGNVALLKGRSNYLCLERLEQQALAGGDLPVQILSDVILLRSWSNQTVDGDISTCVSVAEDSQAWPLVTSTNDNCLGSDCPMYKDCFVVKARKKAMDADVVVVNHHLFLADMVVKESGFGELIPEADVMIFDEAHQLPDIASQYFGQSLSSRQLLDLAKDITIAYRTELKDTQQLQKCADRLAQSAQDFRLQLGEPGYRGNLRELLANPQIQRAFLLLDDTLELCYDVAKLSLGRSALLDAAFERATLYRTRLKRLKEINQPGYSYWYECTSRHFTLALTPLSVADKFKELMAQKPGSWIFTSATLSVNDDLHHFTSRLGIEQAESLLLPSPFDYSRQALLCVLRNLPQTNQPGSARQLAAMLRPIIEANNGRCFMLCTSHAMMRDLAEQFRATMTLPVLLQGETSKGQLLQQFVSAGNALLVATSSFWEGVDVRGDTLSLVIIDKLPFTSPDDPLLKARMEDCRLRGGDPFDEVQLPDAVITLKQGVGRLIRDADDRGVLVICDNRLVMRPYGATFLASLPPAPRTRDIARAVRFLAIPSSR.

The Helicase ATP-binding domain maps to Q10–A272. A45–T52 contributes to the ATP binding site. Residues C108, C168, C173, and C179 each coordinate [4Fe-4S] cluster. Residues D225–H228 carry the DEAH box motif.

Belongs to the helicase family. DinG subfamily. In terms of assembly, interacts with the DNA polymerase III subunit Chi (holC), probably as a 1:1 complex. It depends on [4Fe-4S] cluster as a cofactor. The cofactor is Mg(2+).

It catalyses the reaction Couples ATP hydrolysis with the unwinding of duplex DNA at the replication fork by translocating in the 5'-3' direction. This creates two antiparallel DNA single strands (ssDNA). The leading ssDNA polymer is the template for DNA polymerase III holoenzyme which synthesizes a continuous strand.. The enzyme catalyses ATP + H2O = ADP + phosphate + H(+). Its activity is regulated as follows. Non-hydrolyzable ATP analogs ATP-gamma-S and adenylyl-imidodiphosphate (AMP-PNP) inhibit helicase activity. Functionally, DNA-dependent ATPase and 5'-3' DNA helicase. Has single-stranded (ss)DNA-dependent ATPase activity and 5'-3' helicase activity on forked DNA; both activities were measure in a YoaA:HolC (chi) complex. Requires a 20-35 nucleotide (nt) 5'-ssDNA tail; dsDNA with a 20 nt gap is also unwound. Unwinds damaged 3' nascent ends (such as those terminated by 3' azidothymidine (AZT), 3' dideoxy-C or an abasic site on the translocating strand), to promote repair and AZT excision. Without HolC the protein has much lower activity which could be due to YoaA instability or helicase stimulation by HolC. Genetically identified as involved in the repair of replication forks and tolerance of the chain-terminating nucleoside analog AZT. May act in proofreading during nucleotide misincorporation, it appears to aid in the removal of potential A-to-T transversion mutations in ndk mutants. This is ATP-dependent DNA helicase YoaA (yoaA) from Escherichia coli (strain K12).